We begin with the raw amino-acid sequence, 911 residues long: Isoleucine--tRNA ligase (911 aa).

The 'HIGH' region motif lies at 57 to 67 (PYANGDIHMGH). Glu-551 is an L-isoleucyl-5'-AMP binding site. The 'KMSKS' region signature appears at 592–596 (KMSKS). Lys-595 contributes to the ATP binding site. Positions 881, 884, 901, and 904 each coordinate Zn(2+).

This sequence belongs to the class-I aminoacyl-tRNA synthetase family. IleS type 1 subfamily. In terms of assembly, monomer. Zn(2+) is required as a cofactor.

The protein resides in the cytoplasm. The enzyme catalyses tRNA(Ile) + L-isoleucine + ATP = L-isoleucyl-tRNA(Ile) + AMP + diphosphate. Functionally, catalyzes the attachment of isoleucine to tRNA(Ile). As IleRS can inadvertently accommodate and process structurally similar amino acids such as valine, to avoid such errors it has two additional distinct tRNA(Ile)-dependent editing activities. One activity is designated as 'pretransfer' editing and involves the hydrolysis of activated Val-AMP. The other activity is designated 'posttransfer' editing and involves deacylation of mischarged Val-tRNA(Ile). This Exiguobacterium sibiricum (strain DSM 17290 / CCUG 55495 / CIP 109462 / JCM 13490 / 255-15) protein is Isoleucine--tRNA ligase.